Here is a 134-residue protein sequence, read N- to C-terminus: NADH-quinone oxidoreductase subunit A (134 aa).

Transmembrane regions (helical) follow at residues Phe14–Ile34, Phe66–Trp86, and Ile96–Val116.

Belongs to the complex I subunit 3 family. In terms of assembly, NDH-1 is composed of 13 different subunits. Subunits NuoA, H, J, K, L, M, N constitute the membrane sector of the complex.

It localises to the cell membrane. It catalyses the reaction a quinone + NADH + 5 H(+)(in) = a quinol + NAD(+) + 4 H(+)(out). In terms of biological role, NDH-1 shuttles electrons from NADH, via FMN and iron-sulfur (Fe-S) centers, to quinones in the respiratory chain. The immediate electron acceptor for the enzyme in this species is believed to be ubiquinone. Couples the redox reaction to proton translocation (for every two electrons transferred, four hydrogen ions are translocated across the cytoplasmic membrane), and thus conserves the redox energy in a proton gradient. This Buchnera aphidicola subsp. Acyrthosiphon pisum (strain APS) (Acyrthosiphon pisum symbiotic bacterium) protein is NADH-quinone oxidoreductase subunit A.